The sequence spans 174 residues: ATP-dependent protease subunit HslV (174 aa).

Residue threonine 2 is part of the active site. Positions 157, 160, and 163 each coordinate Na(+).

Belongs to the peptidase T1B family. HslV subfamily. A double ring-shaped homohexamer of HslV is capped on each side by a ring-shaped HslU homohexamer. The assembly of the HslU/HslV complex is dependent on binding of ATP.

It is found in the cytoplasm. The enzyme catalyses ATP-dependent cleavage of peptide bonds with broad specificity.. Allosterically activated by HslU binding. In terms of biological role, protease subunit of a proteasome-like degradation complex believed to be a general protein degrading machinery. This Shewanella sediminis (strain HAW-EB3) protein is ATP-dependent protease subunit HslV.